An 816-amino-acid polypeptide reads, in one-letter code: Cation/H(+) antiporter 8 (816 aa).

The next 12 membrane-spanning stretches (helical) occupy residues 64 to 84 (PKLE…NILF), 97 to 117 (MMLA…NSII), 127 to 147 (IDVA…LKGV), 163 to 183 (VTGV…FNLK), 197 to 214 (VMLL…ARLL), 227 to 247 (VALS…IANV), 255 to 275 (ADGL…FAVV), 297 to 317 (IHGV…LSQF), 343 to 363 (LESF…MLRT), 382 to 402 (FAVA…SVIV), 413 to 433 (SIIL…FYLF), and 447 to 467 (ILVL…GFLY).

This sequence belongs to the monovalent cation:proton antiporter 2 (CPA2) transporter (TC 2.A.37) family. CHX (TC 2.A.37.4) subfamily. Specifically expressed in pollen.

It is found in the membrane. Its function is as follows. May operate as a cation/H(+) antiporter. The protein is Cation/H(+) antiporter 8 (CHX8) of Arabidopsis thaliana (Mouse-ear cress).